Reading from the N-terminus, the 349-residue chain is Neutral protease 2 homolog ACLA_052720 (349 aa).

The signal sequence occupies residues 1 to 19 (MQLTVLASAILALAQGALA). Residues 20-172 (IPAKAPALDV…PAAINLLDRR (153 aa)) constitute a propeptide that is removed on maturation. 2 disulfides stabilise this stretch: Cys178–Cys250 and Cys257–Cys275. His300 contributes to the Zn(2+) binding site. Glu301 is an active-site residue. The Zn(2+) site is built by His304 and Asp315.

Belongs to the peptidase M35 family. Zn(2+) serves as cofactor.

It localises to the secreted. The enzyme catalyses Preferential cleavage of bonds with hydrophobic residues in P1'. Also 3-Asn-|-Gln-4 and 8-Gly-|-Ser-9 bonds in insulin B chain.. Secreted metalloproteinase that allows assimilation of proteinaceous substrates. Shows high activities on basic nuclear substrates such as histone and protamine. The protein is Neutral protease 2 homolog ACLA_052720 of Aspergillus clavatus (strain ATCC 1007 / CBS 513.65 / DSM 816 / NCTC 3887 / NRRL 1 / QM 1276 / 107).